The chain runs to 251 residues: MHILLANDDGYLAPGLAALHRALAPLGRITVVAPEQNHSGASNSLTLQRPLSVFQATEGAQKGFRFVNGTPTDCVHIALTGMIEERPDLVVSGINQGQNMGEDVLYSGTVAAAIEGYLFGVPSIAFSQVDKGWTHLDAAERIAREVVERYLSDPPAGPVLLNVNIPNLPYAEVAGWRATRLGKRHQSQPVIRQENPRGEPIYWVGAAGDAKDASEGTDFHAVAHGFVSLTPLQLDLTDTAQLRSVRRWQTP.

A divalent metal cation is bound by residues D8, D9, S39, and N95.

Belongs to the SurE nucleotidase family. A divalent metal cation serves as cofactor.

Its subcellular location is the cytoplasm. The catalysed reaction is a ribonucleoside 5'-phosphate + H2O = a ribonucleoside + phosphate. Nucleotidase that shows phosphatase activity on nucleoside 5'-monophosphates. This is 5'-nucleotidase SurE from Ralstonia nicotianae (strain ATCC BAA-1114 / GMI1000) (Ralstonia solanacearum).